The following is a 217-amino-acid chain: Zinc finger CCHC-type and RNA-binding motif-containing protein 1 (217 aa).

One can recognise an RRM domain in the interval 10–88; sequence STVYVSNLPF…RVIKASIAID (79 aa). A CCHC-type zinc finger spans residues 105–122; it reads SKCYECGESGHLSYACPK. The tract at residues 120–217 is disordered; the sequence is CPKNMLGERE…YFSDEEELSD (98 aa). Residues 145–163 are compositionally biased toward acidic residues; the sequence is PEEEIEEVEVSEEEGEDPA. A phosphoserine mark is found at serine 155, serine 210, and serine 216.

In terms of assembly, component of the U11/U12 snRNPs that are part of the U12-type spliceosome. Interacts with ZRSR1.

It localises to the nucleus. The protein resides in the nucleoplasm. In Rattus norvegicus (Rat), this protein is Zinc finger CCHC-type and RNA-binding motif-containing protein 1 (Zcrb1).